A 201-amino-acid chain; its full sequence is Orotate phosphoribosyltransferase (201 aa).

Residues K90 and 113–121 (EDIITTGGS) contribute to the 5-phospho-alpha-D-ribose 1-diphosphate site. Positions 117 and 145 each coordinate orotate.

The protein belongs to the purine/pyrimidine phosphoribosyltransferase family. PyrE subfamily. Homodimer. Mg(2+) is required as a cofactor.

The enzyme catalyses orotidine 5'-phosphate + diphosphate = orotate + 5-phospho-alpha-D-ribose 1-diphosphate. The protein operates within pyrimidine metabolism; UMP biosynthesis via de novo pathway; UMP from orotate: step 1/2. Its function is as follows. Catalyzes the transfer of a ribosyl phosphate group from 5-phosphoribose 1-diphosphate to orotate, leading to the formation of orotidine monophosphate (OMP). The protein is Orotate phosphoribosyltransferase of Sulfurovum sp. (strain NBC37-1).